The sequence spans 441 residues: Alpha-methylserine aldolase (441 aa).

Lysine 256 is subject to N6-(pyridoxal phosphate)lysine.

This sequence belongs to the SHMT family. Alpha-methylserine aldolase subfamily. Homodimer. It depends on pyridoxal 5'-phosphate as a cofactor.

The enzyme catalyses 2-methyl-L-serine = formaldehyde + L-alanine. Functionally, catalyzes the reversible interconversion of alpha-methyl-L-serine to L-alanine and formaldehyde. This Variovorax paradoxus protein is Alpha-methylserine aldolase.